The primary structure comprises 406 residues: Peptidase T (406 aa).

Histidine 78 lines the Zn(2+) pocket. Aspartate 80 is an active-site residue. Aspartate 139 is a Zn(2+) binding site. Glutamate 173 serves as the catalytic Proton acceptor. Zn(2+) contacts are provided by glutamate 174, aspartate 196, and histidine 378.

Belongs to the peptidase M20B family. Zn(2+) is required as a cofactor.

The protein resides in the cytoplasm. It catalyses the reaction Release of the N-terminal residue from a tripeptide.. In terms of biological role, cleaves the N-terminal amino acid of tripeptides. In Clostridium perfringens (strain 13 / Type A), this protein is Peptidase T.